We begin with the raw amino-acid sequence, 515 residues long: Maturase K (515 aa).

Belongs to the intron maturase 2 family. MatK subfamily.

Its subcellular location is the plastid. It localises to the chloroplast. In terms of biological role, usually encoded in the trnK tRNA gene intron. Probably assists in splicing its own and other chloroplast group II introns. In Pinus cembra (Swiss stone pine), this protein is Maturase K.